A 709-amino-acid chain; its full sequence is Probable lanosterol 14-alpha demethylase (709 aa).

Cys-425 contributes to the heme binding site.

The protein belongs to the cytochrome P450 family. It depends on heme as a cofactor.

The protein localises to the membrane. It catalyses the reaction a 14alpha-methyl steroid + 3 reduced [NADPH--hemoprotein reductase] + 3 O2 = a Delta(14) steroid + formate + 3 oxidized [NADPH--hemoprotein reductase] + 4 H2O + 4 H(+). The protein operates within steroid biosynthesis; zymosterol biosynthesis; zymosterol from lanosterol: step 1/6. Catalyzes the 14-alpha demethylation of obtusifoliol to 4 alpha-methyl-5 alpha-ergosta-8,14,24(28)-trien-3 beta-ol. The polypeptide is Probable lanosterol 14-alpha demethylase (Acanthamoeba polyphaga (Amoeba)).